Reading from the N-terminus, the 161-residue chain is Tick receptor for ospA (161 aa).

As to quaternary structure, interacts with ospA protein from B.burgdorferi. Glycosylated. Specifically expressed in gut. Localizes predominantly in the intercellular spaces and luminal surface of the gut. In the gut, it localizes along tight junctions. Not expressed in salivary gland or hemolymph.

It is found in the cell membrane. Serves as a receptor for ospA protein of B.burgdorferi, the Lyme disease agent. Required for spirochetal colonization. Essential for pathogen adherence to the vector. The chain is Tick receptor for ospA (TROSPA) from Ixodes scapularis (Black-legged tick).